Consider the following 207-residue polypeptide: Octanoyltransferase (207 aa).

A BPL/LPL catalytic domain is found at 29-204 (DDTADELWLV…ELMVQLGDEE (176 aa)). Residues 68 to 75 (RGGQVTYH), 135 to 137 (SLG), and 148 to 150 (GVA) contribute to the substrate site. Catalysis depends on Cys-166, which acts as the Acyl-thioester intermediate.

It belongs to the LipB family.

The protein resides in the cytoplasm. The enzyme catalyses octanoyl-[ACP] + L-lysyl-[protein] = N(6)-octanoyl-L-lysyl-[protein] + holo-[ACP] + H(+). It participates in protein modification; protein lipoylation via endogenous pathway; protein N(6)-(lipoyl)lysine from octanoyl-[acyl-carrier-protein]: step 1/2. Its function is as follows. Catalyzes the transfer of endogenously produced octanoic acid from octanoyl-acyl-carrier-protein onto the lipoyl domains of lipoate-dependent enzymes. Lipoyl-ACP can also act as a substrate although octanoyl-ACP is likely to be the physiological substrate. The sequence is that of Octanoyltransferase from Methylococcus capsulatus (strain ATCC 33009 / NCIMB 11132 / Bath).